The sequence spans 274 residues: MHIDWFVLLAQLVNFLILIYLLKRFLYTRIIQAMNEREAKIAARFDEAERLKREAEEAARVYEEKNSFLQGQEEKMLNQAREVVNHRQKEWMDSAREEVDAIRRRWIETVLQEKAAFLEHLRQRTGKQVFAIARKILDDLADTAIESKMVDVLIDRIHSLDPAEREKICSALEDSEEGAIVQSAFALFPEDRQRLTDTVRDLLGKPDAVIRYQESSDLIGGIEFLASGHRIAWSISDYLEHLEQDFDRVLHEEVRQTLPKPSGESVMPSEEQRP.

A helical transmembrane segment spans residues 2 to 22 (HIDWFVLLAQLVNFLILIYLL).

Belongs to the ATPase B chain family. As to quaternary structure, F-type ATPases have 2 components, F(1) - the catalytic core - and F(0) - the membrane proton channel. F(1) has five subunits: alpha(3), beta(3), gamma(1), delta(1), epsilon(1). F(0) has three main subunits: a(1), b(2) and c(10-14). The alpha and beta chains form an alternating ring which encloses part of the gamma chain. F(1) is attached to F(0) by a central stalk formed by the gamma and epsilon chains, while a peripheral stalk is formed by the delta and b chains.

Its subcellular location is the cell inner membrane. F(1)F(0) ATP synthase produces ATP from ADP in the presence of a proton or sodium gradient. F-type ATPases consist of two structural domains, F(1) containing the extramembraneous catalytic core and F(0) containing the membrane proton channel, linked together by a central stalk and a peripheral stalk. During catalysis, ATP synthesis in the catalytic domain of F(1) is coupled via a rotary mechanism of the central stalk subunits to proton translocation. Its function is as follows. Component of the F(0) channel, it forms part of the peripheral stalk, linking F(1) to F(0). The chain is ATP synthase subunit b 2 from Syntrophus aciditrophicus (strain SB).